A 902-amino-acid polypeptide reads, in one-letter code: Cytosolic carboxypeptidase 2 (902 aa).

In terms of domain architecture, Peptidase M14 spans 396–666; that stretch reads YPYTYTDLQC…HVCDTLLDFC (271 aa). Zn(2+) contacts are provided by histidine 462, glutamate 465, and histidine 558. Residue glutamate 630 is the Proton donor/acceptor of the active site. Basic residues predominate over residues 746 to 758; that stretch reads FKKKKKKSLQTRK. Disordered stretches follow at residues 746–770 and 796–879; these read FKKK…KNLM and FKNS…PRSR. The segment covering 853–866 has biased composition (polar residues); it reads VSCSPKRTINSSQE.

It belongs to the peptidase M14 family. Interacts with RARRES1, KIF11 AND MAPRE1. Requires Zn(2+) as cofactor.

It localises to the cytoplasm. Its subcellular location is the cytosol. The protein localises to the cytoskeleton. The protein resides in the microtubule organizing center. It is found in the centrosome. It localises to the centriole. Its subcellular location is the cilium basal body. The enzyme catalyses (L-glutamyl)(n+1)-gamma-L-glutamyl-L-glutamyl-[protein] + H2O = (L-glutamyl)(n)-gamma-L-glutamyl-L-glutamyl-[protein] + L-glutamate. Inhibited by RARRES1. Its function is as follows. Metallocarboxypeptidase that mediates deglutamylation of tubulin and non-tubulin target proteins. Catalyzes the removal of polyglutamate side chains present on the gamma-carboxyl group of glutamate residues within the C-terminal tail of tubulin protein. Specifically cleaves tubulin long-side-chains, while it is not able to remove the branching point glutamate. Also catalyzes the removal of polyglutamate residues from the carboxy-terminus of non-tubulin proteins such as MYLK. This is Cytosolic carboxypeptidase 2 from Homo sapiens (Human).